We begin with the raw amino-acid sequence, 237 residues long: Ribonuclease PH (237 aa).

Phosphate contacts are provided by residues Arg86 and 124–126; that span reads GTR.

Belongs to the RNase PH family. Homohexameric ring arranged as a trimer of dimers.

It catalyses the reaction tRNA(n+1) + phosphate = tRNA(n) + a ribonucleoside 5'-diphosphate. Functionally, phosphorolytic 3'-5' exoribonuclease that plays an important role in tRNA 3'-end maturation. Removes nucleotide residues following the 3'-CCA terminus of tRNAs; can also add nucleotides to the ends of RNA molecules by using nucleoside diphosphates as substrates, but this may not be physiologically important. Probably plays a role in initiation of 16S rRNA degradation (leading to ribosome degradation) during starvation. In Tolumonas auensis (strain DSM 9187 / NBRC 110442 / TA 4), this protein is Ribonuclease PH.